Reading from the N-terminus, the 122-residue chain is Large ribosomal subunit protein uL14c (122 aa).

It belongs to the universal ribosomal protein uL14 family. Part of the 50S ribosomal subunit.

It is found in the plastid. Its subcellular location is the chloroplast. Its function is as follows. Binds to 23S rRNA. The protein is Large ribosomal subunit protein uL14c of Staurastrum punctulatum (Green alga).